Consider the following 260-residue polypeptide: MKLYVDAGNTRTKWRLADGREGVVASDDISGMERSFALLAGVVTGVFVCSVLGEAFNRRLEALCGQLFGVPPHFARVKQGVLDIVPAYERLDTLGVDRWLGLVFARSHAKSQCSVVVGAGSALTVDLLDAQACHLGGWIAPGCASVEAALGGKVQFARSEAYLKALQSDGALTPPQTSAFGSSTVACVQAGVDAMIRGFLQQVIACAGTEFGGREAVYFLAGGDSPRVEAMLRELDPNLELVLSPAIVLDALVLWSEWCA.

D6–K13 contributes to the ATP binding site. Substrate-binding positions include Y88 and G95–R98. The Proton acceptor role is filled by D97. ATP is bound at residue S121. Residue T184 coordinates substrate.

It belongs to the type III pantothenate kinase family. In terms of assembly, homodimer. NH4(+) is required as a cofactor. K(+) serves as cofactor.

The protein resides in the cytoplasm. It catalyses the reaction (R)-pantothenate + ATP = (R)-4'-phosphopantothenate + ADP + H(+). Its pathway is cofactor biosynthesis; coenzyme A biosynthesis; CoA from (R)-pantothenate: step 1/5. In terms of biological role, catalyzes the phosphorylation of pantothenate (Pan), the first step in CoA biosynthesis. This chain is Type III pantothenate kinase, found in Saccharophagus degradans (strain 2-40 / ATCC 43961 / DSM 17024).